A 294-amino-acid polypeptide reads, in one-letter code: 4-hydroxy-tetrahydrodipicolinate synthase (294 aa).

Position 45 (Thr45) interacts with pyruvate. The Proton donor/acceptor role is filled by Tyr133. Lys162 functions as the Schiff-base intermediate with substrate in the catalytic mechanism. Pyruvate is bound at residue Ile204.

Belongs to the DapA family. As to quaternary structure, homotetramer; dimer of dimers.

The protein localises to the cytoplasm. The catalysed reaction is L-aspartate 4-semialdehyde + pyruvate = (2S,4S)-4-hydroxy-2,3,4,5-tetrahydrodipicolinate + H2O + H(+). It participates in amino-acid biosynthesis; L-lysine biosynthesis via DAP pathway; (S)-tetrahydrodipicolinate from L-aspartate: step 3/4. Is allosterically regulated by the feedback inhibitor (S)-lysine. Its function is as follows. Catalyzes the condensation of (S)-aspartate-beta-semialdehyde [(S)-ASA] and pyruvate to 4-hydroxy-tetrahydrodipicolinate (HTPA). The polypeptide is 4-hydroxy-tetrahydrodipicolinate synthase (Agrobacterium fabrum (strain C58 / ATCC 33970) (Agrobacterium tumefaciens (strain C58))).